Consider the following 159-residue polypeptide: Ribosomal RNA large subunit methyltransferase H (159 aa).

S-adenosyl-L-methionine contacts are provided by residues Leu76, Gly108, and 127-132 (FGLLTL).

Belongs to the RNA methyltransferase RlmH family. As to quaternary structure, homodimer.

It is found in the cytoplasm. The catalysed reaction is pseudouridine(1915) in 23S rRNA + S-adenosyl-L-methionine = N(3)-methylpseudouridine(1915) in 23S rRNA + S-adenosyl-L-homocysteine + H(+). Its function is as follows. Specifically methylates the pseudouridine at position 1915 (m3Psi1915) in 23S rRNA. This Streptococcus equi subsp. zooepidemicus (strain H70) protein is Ribosomal RNA large subunit methyltransferase H.